Reading from the N-terminus, the 1955-residue chain is MEGTCSEEENLAKRVTPTAVTSGTYGTHVVDTTDLALSDVVIGCGSTIYETSDSIGSDVMLGLSSHGVSSVSGLDRDLNSFKKRIDANTEEQREHADMMVGLQRKIEEYRRRIVDAEKQVSIQKANDDVSFSIKETADTWLPDMKSDAADYEWASRLDEERRRNDELHMQITQQQVDLQRLQKYFEANMQEKEKIYQTREKNLAYYLNAEQRKMLDLWEELQRVRRQFADYKEQTERDLENQKNEVAKVTQSVGGMAGRLNTSSHGDSGLVQDVVLLEAMRRFRELQAVPVGASADDYNALMKKYEETVERVIELESHGDGSTAKMLSLEAELRRTKDKFIECSEFLRKLGDLAAGSYRGDERTSKIVSLSPGGMSLPSEIYRSVRNILRNHDSEMQHIQRKLKNSDTQVCELTTRLEGTEEARRRSDKQLVDAKREINIQQRAVDDANRELRRVEDRLHIMESEKIVAENARQQLEEEVRRLTLQVDQSKADGERRVVEEGEIQKRIVEDEYRSMISELTRRMNAFQDENKRLKNDLGCTKERLKNVEFEYNSTVRKLEDKDIALKHLEDTKLDLLKDLENQRTRYDAVTNELDTLQTTFETSTKNIAQLEANIKEINLMRDEISKEKDSLAQKLADVTHKLEIETVRREDIQRSCVGHSEDVEKQRLQIIEYEREVMALRRLNDELDTNVKTGQAKVTSLENSIISVQTEVTKLTTLNDKLQKEKQSIMSSKQKADTDVDLLKEKLRKLEQECDKLKEENKALHEDEQIARQMCKEEASRIHLLERDLKDAMTEVEELKKQLQKMDEENSERLESVLRTKISSDTVDTSEIAEYTEVKVKELREKYKADLERLQSNKDDLERRVQILEDELAERQRIVERQRTEMNDLKLEYQLESDRLRAEMATVELKYQSEVEDERDQRSRDADSWKVTSEELRSKISFMEKMLEEAKHRETVLREEATEWEEKHDIISNESLKLRNEIERIRSDAEEDIQKWKKDVHMAQNELKNLERVCETLRSQLTAANDRVASLNTTINEQTSKIRELNSHEHRLEEDLADSRATSSAIENDLGNATGRLRSSEEHNAILQSENRKSKTEIEALKHQIDTIMNTKESCESEVERLKKKIVQTTTITKEQNEKIEKLRIEHDHLERDYREKTKEVDRLKEVEKTFELKVNRARQELDEFSKKLIVTETERNAISGEAQKLDKEVQLVKEQLQYKSDEFHKALDELANAHRISEEGRVNAIHQLEARRFEIDDLKSRLENSEQRLATLQQEYVNADKERGALNDAMRRFQATISRSVVAEEHVDVSTIETQMQKLMSRIEAIERERNEYRDSLNRLKNRCSTSYSSVDRQETVYRTFEERVISAEDERRKVELKLSSMKEMLKSQEEKLKQRDEERRNLKSNIVTFELEARAKDAQIRHLNDLLKRVQAELENSQNDNRALRERQEQYETNRIHLEQRLPTDEGEPRVKALMAAFATERQSLSDSLKKLASQLQISETKNADLRDDAERLKRDLLKAERVEEDLRRNLVEQTEIMRENQQLRSQLGVAQSDLANASGRKQQLEGELAAVRAELRDHKQHLHDAISRIAELQRQLQDANAEKSRLTDRIIGLEKTIGTLRNTETELRAQLSTAADERKALNSELEEMRRRIVQMESEKKDVDNQLEEVNKARIIMTKKIEILETEKHSAELVISETASQREAIERSLNALERENKELYKNCAQLQQQIAQLEMDNGERLIALTTKQKEDHEKFVAAVKAEKVQVERIVENRDRAQKSRIRQLENQLSMMREQLDNERARSHQMSERFIVNETNRRVSSSSFRLSGDAAGVAAATILHPQTDRLDYVFANRSALSSYYTVPTEQHASRGKEAYRTSSTIKSSEGTTRESYTYQSRTVSSNIIEQANGMTSSASGEGMSRAYPPTEVNQGDVTGRKSRPATRKQQMKSTFSE.

Coiled coils occupy residues Lys82–Val129, Glu152–Ser317, Val385–Leu1747, and Glu1770–Ile1813. 2 disordered regions span residues Pro1865–Tyr1896 and Met1912–Glu1955. Residues Arg1878 to Tyr1896 are compositionally biased toward polar residues. A compositionally biased stretch (basic residues) spans Arg1938–Gln1948.

Its subcellular location is the cytoplasm. The protein localises to the cytoskeleton. It localises to the microtubule organizing center. The protein resides in the centrosome. It is found in the chromosome. Its subcellular location is the centromere. The protein localises to the kinetochore. It localises to the spindle. May play a role in the organization of the spindle apparatus and its interaction with the centromeres. This is 227 kDa spindle- and centromere-associated protein (PUMA1) from Parascaris univalens (Nematode worm).